The following is a 144-amino-acid chain: Transcription antitermination protein NusB (144 aa).

Belongs to the NusB family.

Its function is as follows. Involved in transcription antitermination. Required for transcription of ribosomal RNA (rRNA) genes. Binds specifically to the boxA antiterminator sequence of the ribosomal RNA (rrn) operons. This chain is Transcription antitermination protein NusB, found in Pasteurella multocida (strain Pm70).